A 208-amino-acid chain; its full sequence is Small ribosomal subunit protein uS4 (208 aa).

The region spanning 98–161 is the S4 RNA-binding domain; it reads QRLDNVVFRM…KSNPQVVRAL (64 aa).

Belongs to the universal ribosomal protein uS4 family. As to quaternary structure, part of the 30S ribosomal subunit. Contacts protein S5. The interaction surface between S4 and S5 is involved in control of translational fidelity.

Its function is as follows. One of the primary rRNA binding proteins, it binds directly to 16S rRNA where it nucleates assembly of the body of the 30S subunit. Functionally, with S5 and S12 plays an important role in translational accuracy. The protein is Small ribosomal subunit protein uS4 of Aliarcobacter butzleri (strain RM4018) (Arcobacter butzleri).